The following is a 588-amino-acid chain: Aspartate--tRNA ligase (588 aa).

Position 177 (glutamate 177) interacts with L-aspartate. Residues 201–204 (QLFK) are aspartate. Position 223 (arginine 223) interacts with L-aspartate. Residues 223–225 (RDE) and glutamine 232 contribute to the ATP site. Residue histidine 451 participates in L-aspartate binding. An ATP-binding site is contributed by glutamate 485. Position 492 (arginine 492) interacts with L-aspartate. Residue 537 to 540 (GLDR) participates in ATP binding.

This sequence belongs to the class-II aminoacyl-tRNA synthetase family. Type 1 subfamily. Homodimer.

It localises to the cytoplasm. The enzyme catalyses tRNA(Asp) + L-aspartate + ATP = L-aspartyl-tRNA(Asp) + AMP + diphosphate. Its function is as follows. Catalyzes the attachment of L-aspartate to tRNA(Asp) in a two-step reaction: L-aspartate is first activated by ATP to form Asp-AMP and then transferred to the acceptor end of tRNA(Asp). This is Aspartate--tRNA ligase from Staphylococcus haemolyticus (strain JCSC1435).